The chain runs to 892 residues: MSDSISDSKSSELLNSTFYSSTSINTLDHARTFRNSLILKEISDQSLNSSIKPCESVLDRDVESSVLQRSFGESNARDSEVQTVNMTTSPSLSALADILNERSKYADQKTRKAQNIESSIIEEEEEAEEQNNSINYHEDITGSRLSVREEANENLAMTSPNLIDIDGSNSIQVAPLSLPSFEEPDFLSTPRVKPDSQGPRSKVSTRRTILERDNNLPVKREENTIINSETESTTHSAPFLKEDPKPSPPSSKLYNPKVRLNKAEARKYTDSSAQRTTSAGSVLEDTSMHKKKKSIFSFLKKKEPKPVIGNNSVTNEKNKMSSSSTFSMNIQTSLKTPEKLKKKSHSSSSIFNSFLKGKIETSDSPRKEPMRQKKRTPKSKDKKQDTEQIIDAASVLSTESPLLRKNHDDTPVKIDHVTRSIDQRKPTPLNMDLILGGDKQINTPLQEHVREDDDAKNDLQLPTKDNFLSLDYEAPSPAFSKHDTGEVLFPKFLDNHEVDSIVSLERTRSTKSNKRSSMNSQRRSLTDTLSIKAQSEGMFITEASSVVLSTPDLTKSPASSILKNGRFEYSDNFSREHSYEGTTNEDFLDIKDDSGPLKKDDIFLESIEQKFDQLVMASDEEKTEVERDVPKPREEPLKKDSERQSVFADDDNELISDIMEFASFINFGDDDLNLDLDLGDTTASYATETPEPVGNDEVNRSGTFDTRNNKEDSYKERETQSYSAAGATTYGDERQGQLHTFEQDGSEINDNEFENEDFNKHIEQPIEVTPRNNAYLPEFEPNRPVSMSFKGLKAPRMNTSFIDSMTPDSPVKSDLTSLGEVYVNSNNDQGVRFSSQIILYDTYGEFEYDRHPEISTCNQLTPQLAQMIKLELNELKSAMEVHDDSRCYTHFY.

2 positions are modified to phosphoserine: Ser-43 and Ser-133. Disordered stretches follow at residues 185–287 (DFLS…EDTS) and 305–387 (KPVI…QDTE). Basic and acidic residues predominate over residues 208-223 (TILERDNNLPVKREEN). 2 stretches are compositionally biased toward polar residues: residues 224 to 236 (TIIN…TTHS) and 270 to 280 (DSSAQRTTSAG). Ser-281 carries the phosphoserine modification. The segment covering 309 to 335 (GNNSVTNEKNKMSSSSTFSMNIQTSLK) has biased composition (polar residues). The span at 346 to 356 (SSSSIFNSFLK) shows a compositional bias: low complexity. Residues 357–371 (GKIETSDSPRKEPMR) are compositionally biased toward basic and acidic residues. Ser-364 and Ser-394 each carry phosphoserine. Position 410 is a phosphothreonine (Thr-410). Phosphoserine occurs at positions 476, 500, and 503. Disordered regions lie at residues 506–526 (RTRS…RSLT), 618–644 (SDEE…SERQ), and 685–734 (YATE…GDER). Phosphoserine is present on Ser-618. The segment covering 624 to 643 (EVERDVPKPREEPLKKDSER) has biased composition (basic and acidic residues). Position 703 is a phosphothreonine (Thr-703). The span at 707-719 (RNNKEDSYKERET) shows a compositional bias: basic and acidic residues. 2 positions are modified to phosphoserine: Ser-746 and Ser-825.

In terms of assembly, may interact with CHS3 and seems to be an adapter (along with SKT5) to link CHS3 to septins.

The sequence is that of Protein BNI4 (BNI4) from Saccharomyces cerevisiae (strain ATCC 204508 / S288c) (Baker's yeast).